Consider the following 169-residue polypeptide: Probable phospholipid hydroperoxide glutathione peroxidase (169 aa).

The active site involves Cys43.

It belongs to the glutathione peroxidase family.

It localises to the cytoplasm. It carries out the reaction a hydroperoxy polyunsaturated fatty acid + 2 glutathione = a hydroxy polyunsaturated fatty acid + glutathione disulfide + H2O. In terms of biological role, protects cells and enzymes from oxidative damage, by catalyzing the reduction of hydrogen peroxide, lipid peroxides and organic hydroperoxide, by glutathione. The chain is Probable phospholipid hydroperoxide glutathione peroxidase from Nicotiana tabacum (Common tobacco).